The sequence spans 458 residues: Probable M18 family aminopeptidase 1 (458 aa).

His-95, His-170, and His-434 together coordinate Zn(2+).

Belongs to the peptidase M18 family. Zn(2+) serves as cofactor.

This is Probable M18 family aminopeptidase 1 from Borreliella afzelii (strain PKo) (Borrelia afzelii).